The sequence spans 301 residues: Porphobilinogen deaminase (301 aa).

Cysteine 242 is subject to S-(dipyrrolylmethanemethyl)cysteine.

Belongs to the HMBS family. Monomer. Requires dipyrromethane as cofactor.

It catalyses the reaction 4 porphobilinogen + H2O = hydroxymethylbilane + 4 NH4(+). It participates in porphyrin-containing compound metabolism; protoporphyrin-IX biosynthesis; coproporphyrinogen-III from 5-aminolevulinate: step 2/4. Tetrapolymerization of the monopyrrole PBG into the hydroxymethylbilane pre-uroporphyrinogen in several discrete steps. This chain is Porphobilinogen deaminase, found in Rickettsia canadensis (strain McKiel).